The sequence spans 212 residues: Cytidylate kinase (212 aa).

Position 7–15 (7–15) interacts with ATP; that stretch reads GPAASGKGT.

Belongs to the cytidylate kinase family. Type 1 subfamily.

The protein resides in the cytoplasm. It catalyses the reaction CMP + ATP = CDP + ADP. The enzyme catalyses dCMP + ATP = dCDP + ADP. This chain is Cytidylate kinase, found in Nitrobacter winogradskyi (strain ATCC 25391 / DSM 10237 / CIP 104748 / NCIMB 11846 / Nb-255).